The following is a 414-amino-acid chain: Esterase FrsA (414 aa).

The protein belongs to the FrsA family.

It carries out the reaction a carboxylic ester + H2O = an alcohol + a carboxylate + H(+). Its function is as follows. Catalyzes the hydrolysis of esters. The sequence is that of Esterase FrsA from Escherichia coli O6:K15:H31 (strain 536 / UPEC).